The primary structure comprises 352 residues: tRNA-specific 2-thiouridylase MnmA (352 aa).

Residues 11–18 (AMSGGVDS) and Met37 contribute to the ATP site. Cys101 acts as the Nucleophile in catalysis. Cysteines 101 and 197 form a disulfide. Gly125 contacts ATP. Residues 147–149 (KDQ) form an interaction with tRNA region. Catalysis depends on Cys197, which acts as the Cysteine persulfide intermediate. Residues 302–303 (RY) form an interaction with tRNA region.

The protein belongs to the MnmA/TRMU family.

The protein resides in the cytoplasm. It catalyses the reaction S-sulfanyl-L-cysteinyl-[protein] + uridine(34) in tRNA + AH2 + ATP = 2-thiouridine(34) in tRNA + L-cysteinyl-[protein] + A + AMP + diphosphate + H(+). Functionally, catalyzes the 2-thiolation of uridine at the wobble position (U34) of tRNA, leading to the formation of s(2)U34. In Syntrophotalea carbinolica (strain DSM 2380 / NBRC 103641 / GraBd1) (Pelobacter carbinolicus), this protein is tRNA-specific 2-thiouridylase MnmA.